Here is a 315-residue protein sequence, read N- to C-terminus: MKFVQLPDVQASNPDVMVGLTRVGVTEVKKMVEITRSDKRPIILIPTFDIFVDLPSYRKGANLSRNLEAIDRTLEEALNQPVYRIEDLCVDVAKRLLETHEYASNAEVRMHGEYMMKKKSPKTGLECQEVYDIYADAIVVRGGIIRKTIGAKVIAMTACPCAQEISKETAFKKLAALGVADNVIAEFLDDMPMPTHNQRGVGTIKIESGNDVKVSIEAIIDIIENSMSSQMYELLKREDERYVVHSAHKNPKFVEDCVRTMAKNLVRKFPSLPDDAVITIEQVNEESIHRHNAFAERMATFGELKKEMLSNGPVL.

Belongs to the GTP cyclohydrolase IV family. As to quaternary structure, homodimer. Fe(2+) is required as a cofactor.

The enzyme catalyses GTP + H2O = 7,8-dihydroneopterin 2',3'-cyclic phosphate + formate + diphosphate + H(+). It participates in cofactor biosynthesis; 5,6,7,8-tetrahydromethanopterin biosynthesis. Functionally, converts GTP to 7,8-dihydro-D-neopterin 2',3'-cyclic phosphate, the first intermediate in the biosynthesis of coenzyme methanopterin. In Methanocella arvoryzae (strain DSM 22066 / NBRC 105507 / MRE50), this protein is GTP cyclohydrolase MptA 1.